We begin with the raw amino-acid sequence, 258 residues long: Type III pantothenate kinase (258 aa).

ATP is bound at residue 6–13 (DVGNTNTV). Residues Tyr-100 and 107-110 (GADR) contribute to the substrate site. Asp-109 (proton acceptor) is an active-site residue. Asp-129 is a K(+) binding site. Thr-132 contacts ATP. Substrate is bound at residue Thr-184.

This sequence belongs to the type III pantothenate kinase family. Homodimer. NH4(+) serves as cofactor. K(+) is required as a cofactor.

It localises to the cytoplasm. It catalyses the reaction (R)-pantothenate + ATP = (R)-4'-phosphopantothenate + ADP + H(+). It participates in cofactor biosynthesis; coenzyme A biosynthesis; CoA from (R)-pantothenate: step 1/5. Catalyzes the phosphorylation of pantothenate (Pan), the first step in CoA biosynthesis. This Geobacillus kaustophilus (strain HTA426) protein is Type III pantothenate kinase.